The chain runs to 494 residues: Glutamyl-tRNA(Gln) amidotransferase subunit A (494 aa).

Active-site charge relay system residues include K79 and S159. The active-site Acyl-ester intermediate is the S183.

It belongs to the amidase family. GatA subfamily. As to quaternary structure, heterotrimer of A, B and C subunits.

It catalyses the reaction L-glutamyl-tRNA(Gln) + L-glutamine + ATP + H2O = L-glutaminyl-tRNA(Gln) + L-glutamate + ADP + phosphate + H(+). Allows the formation of correctly charged Gln-tRNA(Gln) through the transamidation of misacylated Glu-tRNA(Gln) in organisms which lack glutaminyl-tRNA synthetase. The reaction takes place in the presence of glutamine and ATP through an activated gamma-phospho-Glu-tRNA(Gln). In Bartonella tribocorum (strain CIP 105476 / IBS 506), this protein is Glutamyl-tRNA(Gln) amidotransferase subunit A.